The chain runs to 692 residues: Translation initiation factor IF-2 (692 aa).

The interval 51–114 is disordered; sequence KAKPENAKKG…KPAETPGKIT (64 aa). Residues 59–84 show a composition bias toward low complexity; it reads KGQNQKQSNNQQQNRQKQNQKNQSKP. Positions 85–94 are enriched in basic residues; it reads NKNKKQKGPK. A tr-type G domain is found at 193 to 362; that stretch reads ERPAVVTIMG…LLVSEVEELK (170 aa). The G1 stretch occupies residues 202-209; that stretch reads GHVDHGKT. Position 202-209 (202-209) interacts with GTP; it reads GHVDHGKT. The G2 stretch occupies residues 227-231; it reads GITQH. The segment at 248–251 is G3; sequence DTPG. GTP contacts are provided by residues 248-252 and 302-305; these read DTPGH and NKMD. Residues 302 to 305 form a G4 region; that stretch reads NKMD. The segment at 338–340 is G5; sequence SAI.

Belongs to the TRAFAC class translation factor GTPase superfamily. Classic translation factor GTPase family. IF-2 subfamily.

The protein localises to the cytoplasm. In terms of biological role, one of the essential components for the initiation of protein synthesis. Protects formylmethionyl-tRNA from spontaneous hydrolysis and promotes its binding to the 30S ribosomal subunits. Also involved in the hydrolysis of GTP during the formation of the 70S ribosomal complex. In Oceanobacillus iheyensis (strain DSM 14371 / CIP 107618 / JCM 11309 / KCTC 3954 / HTE831), this protein is Translation initiation factor IF-2.